The sequence spans 116 residues: Immunoglobulin heavy variable 3-13 (116 aa).

An N-terminal signal peptide occupies residues 1–19; the sequence is MELGLSWVFLVAILEGVQC. A framework-1 region spans residues 20–44; the sequence is EVQLVESGGGLVQPGGSLRLSCAAS. An Ig-like domain is found at 20 to 116; that stretch reads EVQLVESGGG…GDTAVYYCAR (97 aa). C41 and C114 are oxidised to a cystine. The tract at residues 45–52 is complementarity-determining-1; it reads GFTFSSYD. The framework-2 stretch occupies residues 53–69; it reads MHWVRQATGKGLEWVSA. The complementarity-determining-2 stretch occupies residues 70–76; sequence IGTAGDP. The segment at 77–114 is framework-3; that stretch reads YYPGSVKGRFTISRENAKNSLYLQMNSLRAGDTAVYYC. Residues 115–116 are complementarity-determining-3; the sequence is AR.

As to quaternary structure, immunoglobulins are composed of two identical heavy chains and two identical light chains; disulfide-linked.

It localises to the secreted. Its subcellular location is the cell membrane. In terms of biological role, v region of the variable domain of immunoglobulin heavy chains that participates in the antigen recognition. Immunoglobulins, also known as antibodies, are membrane-bound or secreted glycoproteins produced by B lymphocytes. In the recognition phase of humoral immunity, the membrane-bound immunoglobulins serve as receptors which, upon binding of a specific antigen, trigger the clonal expansion and differentiation of B lymphocytes into immunoglobulins-secreting plasma cells. Secreted immunoglobulins mediate the effector phase of humoral immunity, which results in the elimination of bound antigens. The antigen binding site is formed by the variable domain of one heavy chain, together with that of its associated light chain. Thus, each immunoglobulin has two antigen binding sites with remarkable affinity for a particular antigen. The variable domains are assembled by a process called V-(D)-J rearrangement and can then be subjected to somatic hypermutations which, after exposure to antigen and selection, allow affinity maturation for a particular antigen. The sequence is that of Immunoglobulin heavy variable 3-13 from Homo sapiens (Human).